The sequence spans 339 residues: Fructose-1,6-bisphosphatase class 1 (339 aa).

The Mg(2+) site is built by Glu-92, Asp-114, Leu-116, and Asp-117. Substrate contacts are provided by residues 117–120 (DGSS), Asn-213, and Lys-279. Glu-285 serves as a coordination point for Mg(2+).

It belongs to the FBPase class 1 family. Homotetramer. Mg(2+) serves as cofactor.

The protein localises to the cytoplasm. It carries out the reaction beta-D-fructose 1,6-bisphosphate + H2O = beta-D-fructose 6-phosphate + phosphate. Its pathway is carbohydrate biosynthesis; gluconeogenesis. The polypeptide is Fructose-1,6-bisphosphatase class 1 (Acidovorax sp. (strain JS42)).